The primary structure comprises 157 residues: Small ribosomal subunit protein uS7 (157 aa).

This sequence belongs to the universal ribosomal protein uS7 family. In terms of assembly, part of the 30S ribosomal subunit. Contacts proteins S9 and S11.

Functionally, one of the primary rRNA binding proteins, it binds directly to 16S rRNA where it nucleates assembly of the head domain of the 30S subunit. Is located at the subunit interface close to the decoding center, probably blocks exit of the E-site tRNA. This chain is Small ribosomal subunit protein uS7, found in Marinomonas sp. (strain MWYL1).